A 481-amino-acid polypeptide reads, in one-letter code: Vanillin dehydrogenase (481 aa).

An NAD(+)-binding site is contributed by 228-233 (GSTHVG). Active-site residues include Glu250 and Cys284.

This sequence belongs to the aldehyde dehydrogenase family.

The catalysed reaction is vanillin + NAD(+) + H2O = vanillate + NADH + 2 H(+). Catalyzes the NAD-dependent oxidation of vanillin to vanillic acid. The protein is Vanillin dehydrogenase (vdh) of Pseudomonas sp. (strain HR199 / DSM 7063).